The chain runs to 458 residues: F-box/FBD/LRR-repeat protein At1g78750 (458 aa).

The F-box domain occupies Val17–Phe67. LRR repeat units follow at residues Cys152–Ile183, Val184–Arg209, Val231–Asp258, Asp302–Ser327, and Phe345–Ser370. Residues Lys376–Leu428 enclose the FBD domain.

This chain is F-box/FBD/LRR-repeat protein At1g78750, found in Arabidopsis thaliana (Mouse-ear cress).